A 570-amino-acid chain; its full sequence is BRICHOS domain-containing protein C09F5.1 (570 aa).

Topologically, residues 1–288 (MVVEQIEVIE…YTPELLRSLC (288 aa)) are cytoplasmic. Polar residues-rich tracts occupy residues 93–107 (SGATNSSFLNTSGDS) and 228–246 (TSTLNSRRFPPQSQTSLVS). Disordered regions lie at residues 93 to 116 (SGATNSSFLNTSGDSRVSYPGADR) and 218 to 248 (SSWDGDEKKMTSTLNSRRFPPQSQTSLVSRE). The helical transmembrane segment at 289-309 (CILLLLLLLLFLMFIIFNAIF) threads the bilayer. Over 310–570 (NRYAVSEFLL…RKSINNATLV (261 aa)) the chain is Extracellular. One can recognise a BRICHOS domain in the interval 369–461 (TAVDFNTGYV…IDDCEGAQWY (93 aa)). A disulfide bridge links C395 with C455.

Its subcellular location is the membrane. The protein is BRICHOS domain-containing protein C09F5.1 of Caenorhabditis elegans.